Here is a 212-residue protein sequence, read N- to C-terminus: Pyrrolidone-carboxylate peptidase (212 aa).

Catalysis depends on residues E78, C141, and H165.

This sequence belongs to the peptidase C15 family. As to quaternary structure, homotetramer.

The protein resides in the cytoplasm. The enzyme catalyses Release of an N-terminal pyroglutamyl group from a polypeptide, the second amino acid generally not being Pro.. Removes 5-oxoproline from various penultimate amino acid residues except L-proline. This chain is Pyrrolidone-carboxylate peptidase, found in Staphylococcus aureus (strain bovine RF122 / ET3-1).